We begin with the raw amino-acid sequence, 359 residues long: Peptide chain release factor 1 (359 aa).

At Gln236 the chain carries N5-methylglutamine.

Belongs to the prokaryotic/mitochondrial release factor family. Post-translationally, methylated by PrmC. Methylation increases the termination efficiency of RF1.

The protein resides in the cytoplasm. Its function is as follows. Peptide chain release factor 1 directs the termination of translation in response to the peptide chain termination codons UAG and UAA. The chain is Peptide chain release factor 1 from Streptococcus agalactiae.